We begin with the raw amino-acid sequence, 569 residues long: MKYYLYLFLLFTFANLLYSCPTYPLPIKIDQNDPLLLKAYNDIDLLIQSKMKADGVKSFVATIVYMDKVVFSKAYGKLNYLDINSPNLTLDHNFRISSVTKVFTSLMMFKLRDQGIINSLDDDIRDYFPKFKIKSIFKKKEEKFITFRQLASHQSGLSRETPCHRNEFGTSNCTEKIILAKLSKQFLISKPTTLSHYSNLGYSLLGRTLGESLRMKRMKEQEPYEYWVTNNIFKPLGMNNTTFNYEDIINNTAPGLVNNNGKYSIPSMTKSGWNSPGGGVFSTARDMGKLLIHLLGMNNNSLDIRSPSYLKESTLNELFSPSNLLNDGSASYGMPFLHSYSTNNSLWILSKNGDLQGYVSNIAFVKPYKLGLFFSSLTSVSSSDVYTNAAIDILIPVYKKLLEQAAIDSVINSTTTSSNSTTTTTTTTTTTTTTTNNTMESIFISKIPHSLLIGIYTNDYGNKFLILNQTTYGDYLNRLLVSYNGASLVLNKFELDNEYPYIKRISFYNESIPTCRTIASGSNDELIYFTFKDINGTIIDFNNNNNNQNIDINNLFVYSVQIMGSLLFK.

Positions 1–19 (MKYYLYLFLLFTFANLLYS) are cleaved as a signal peptide. Asn87, Asn172, Asn239, Asn240, Asn250, Asn299, Asn343, Asn412, Asn419, Asn436, Asn468, Asn509, and Asn535 each carry an N-linked (GlcNAc...) asparagine glycan.

It belongs to the beta-lactamase family.

The protein resides in the secreted. The protein is Beta-lactamase-like protein 4 of Dictyostelium discoideum (Social amoeba).